Reading from the N-terminus, the 364-residue chain is UDP-N-acetylglucosamine--N-acetylmuramyl-(pentapeptide) pyrophosphoryl-undecaprenol N-acetylglucosamine transferase (364 aa).

Residues 10 to 12 (TGG), Asn-124, Arg-165, Ser-193, Ile-248, and Gln-293 contribute to the UDP-N-acetyl-alpha-D-glucosamine site.

The protein belongs to the glycosyltransferase 28 family. MurG subfamily.

The protein resides in the cell inner membrane. The catalysed reaction is di-trans,octa-cis-undecaprenyl diphospho-N-acetyl-alpha-D-muramoyl-L-alanyl-D-glutamyl-meso-2,6-diaminopimeloyl-D-alanyl-D-alanine + UDP-N-acetyl-alpha-D-glucosamine = di-trans,octa-cis-undecaprenyl diphospho-[N-acetyl-alpha-D-glucosaminyl-(1-&gt;4)]-N-acetyl-alpha-D-muramoyl-L-alanyl-D-glutamyl-meso-2,6-diaminopimeloyl-D-alanyl-D-alanine + UDP + H(+). It functions in the pathway cell wall biogenesis; peptidoglycan biosynthesis. Its function is as follows. Cell wall formation. Catalyzes the transfer of a GlcNAc subunit on undecaprenyl-pyrophosphoryl-MurNAc-pentapeptide (lipid intermediate I) to form undecaprenyl-pyrophosphoryl-MurNAc-(pentapeptide)GlcNAc (lipid intermediate II). This Geobacter metallireducens (strain ATCC 53774 / DSM 7210 / GS-15) protein is UDP-N-acetylglucosamine--N-acetylmuramyl-(pentapeptide) pyrophosphoryl-undecaprenol N-acetylglucosamine transferase.